A 361-amino-acid chain; its full sequence is Blue-sensitive opsin (361 aa).

Topologically, residues Met1 to Leu43 are extracellular. Asn24 carries N-linked (GlcNAc...) asparagine glycosylation. The helical transmembrane segment at Phe44 to Cys68 threads the bilayer. The Cytoplasmic segment spans residues Thr69–Asn80. A helical membrane pass occupies residues Tyr81 to Ser106. Over Gln107–Glu120 the chain is Extracellular. A disulfide bond links Cys117 and Cys194. The helical transmembrane segment at Gly121–Phe140 threads the bilayer. Residues Glu141–His159 lie on the Cytoplasmic side of the membrane. Residues Ala160 to Ser183 form a helical membrane-spanning segment. The Extracellular segment spans residues Arg184 to Ser209. Residues Tyr210–Leu237 form a helical membrane-spanning segment. The Cytoplasmic segment spans residues Arg238–Lys259. A helical membrane pass occupies residues Met260–Val283. Topologically, residues Thr284–Glu291 are extracellular. Residues Val292–Met316 form a helical membrane-spanning segment. Position 303 is an N6-(retinylidene)lysine (Lys303). Over Asn317 to Ala361 the chain is Cytoplasmic. A disordered region spans residues Asp338–Ala361. The segment covering Ser342–Ala361 has biased composition (low complexity).

Belongs to the G-protein coupled receptor 1 family. Opsin subfamily. Phosphorylated on some or all of the serine and threonine residues present in the C-terminal region. In terms of tissue distribution, the color pigments are found in the cone photoreceptor cells.

The protein resides in the membrane. Functionally, visual pigments are the light-absorbing molecules that mediate vision. They consist of an apoprotein, opsin, covalently linked to cis-retinal. The sequence is that of Blue-sensitive opsin from Gallus gallus (Chicken).